The chain runs to 692 residues: Elongation factor G (692 aa).

Positions 8–283 (NRIRNIGIAA…AVIDYLPAPT (276 aa)) constitute a tr-type G domain. Residues 17-24 (AHIDAGKT), 81-85 (DTPGH), and 135-138 (NKMD) contribute to the GTP site.

Belongs to the TRAFAC class translation factor GTPase superfamily. Classic translation factor GTPase family. EF-G/EF-2 subfamily.

The protein localises to the cytoplasm. Catalyzes the GTP-dependent ribosomal translocation step during translation elongation. During this step, the ribosome changes from the pre-translocational (PRE) to the post-translocational (POST) state as the newly formed A-site-bound peptidyl-tRNA and P-site-bound deacylated tRNA move to the P and E sites, respectively. Catalyzes the coordinated movement of the two tRNA molecules, the mRNA and conformational changes in the ribosome. This chain is Elongation factor G, found in Helicobacter acinonychis (strain Sheeba).